The primary structure comprises 114 residues: Putative movement protein (114 aa).

The helical transmembrane segment at 27–47 (LIGIILLVTVCLTVLWVCIML) threads the bilayer. Positions 79 to 114 (RTPFEATGPERERNWEARRQSTTVNPASQPNTGSVF) are disordered. Basic and acidic residues predominate over residues 86 to 97 (GPERERNWEARR). The span at 98-114 (QSTTVNPASQPNTGSVF) shows a compositional bias: polar residues.

Belongs to the nanovirus movement protein family.

Its subcellular location is the host cell membrane. May transport viral genome to neighboring plant cells directly through plasmosdesmata, without any budding. The movement protein allows efficient cell to cell propagation, by bypassing the host cell wall barrier. The polypeptide is Putative movement protein (DNA-M) (Faba bean necrotic yellows virus (isolate Egyptian EV1-93) (FBNYV)).